The chain runs to 447 residues: Tubulin alpha chain (447 aa).

GTP contacts are provided by Gln11, Glu71, Gly144, Thr145, Thr179, Asn206, and Asn228. Mg(2+) is bound at residue Glu71. Residue Glu254 is part of the active site.

The protein belongs to the tubulin family. In terms of assembly, dimer of alpha and beta chains. A typical microtubule is a hollow water-filled tube with an outer diameter of 25 nm and an inner diameter of 15 nM. Alpha-beta heterodimers associate head-to-tail to form protofilaments running lengthwise along the microtubule wall with the beta-tubulin subunit facing the microtubule plus end conferring a structural polarity. Microtubules usually have 13 protofilaments but different protofilament numbers can be found in some organisms and specialized cells. It depends on Mg(2+) as a cofactor.

Its subcellular location is the cytoplasm. It localises to the cytoskeleton. It carries out the reaction GTP + H2O = GDP + phosphate + H(+). Tubulin is the major constituent of microtubules, a cylinder consisting of laterally associated linear protofilaments composed of alpha- and beta-tubulin heterodimers. Microtubules grow by the addition of GTP-tubulin dimers to the microtubule end, where a stabilizing cap forms. Below the cap, tubulin dimers are in GDP-bound state, owing to GTPase activity of alpha-tubulin. This is Tubulin alpha chain (TUBA) from Avena sativa (Oat).